The chain runs to 342 residues: L-threonine 3-dehydrogenase (342 aa).

Cys-38 lines the Zn(2+) pocket. Active-site charge relay system residues include Thr-40 and His-43. Zn(2+) contacts are provided by His-63, Glu-64, Cys-93, Cys-96, Cys-99, and Cys-107. NAD(+) contacts are provided by residues Ile-175, Asp-195, Arg-200, 262–264 (LGI), and 286–287 (IY).

The protein belongs to the zinc-containing alcohol dehydrogenase family. In terms of assembly, homotetramer. Zn(2+) is required as a cofactor.

The protein resides in the cytoplasm. The catalysed reaction is L-threonine + NAD(+) = (2S)-2-amino-3-oxobutanoate + NADH + H(+). The protein operates within amino-acid degradation; L-threonine degradation via oxydo-reductase pathway; glycine from L-threonine: step 1/2. Functionally, catalyzes the NAD(+)-dependent oxidation of L-threonine to 2-amino-3-ketobutyrate. The chain is L-threonine 3-dehydrogenase from Aeromonas hydrophila subsp. hydrophila (strain ATCC 7966 / DSM 30187 / BCRC 13018 / CCUG 14551 / JCM 1027 / KCTC 2358 / NCIMB 9240 / NCTC 8049).